Consider the following 153-residue polypeptide: UPF0756 membrane protein BCQ_4399 (153 aa).

Helical transmembrane passes span 8 to 28, 54 to 74, 87 to 107, and 117 to 137; these read FLFI…TVAI, LGVT…EIGF, WIAL…VQLL, and LVFG…GPLI.

The protein belongs to the UPF0756 family.

It localises to the cell membrane. The chain is UPF0756 membrane protein BCQ_4399 from Bacillus cereus (strain Q1).